The chain runs to 155 residues: 3-hydroxyacyl-[acyl-carrier-protein] dehydratase FabZ (155 aa).

Histidine 59 is an active-site residue.

Belongs to the thioester dehydratase family. FabZ subfamily.

The protein resides in the cytoplasm. It carries out the reaction a (3R)-hydroxyacyl-[ACP] = a (2E)-enoyl-[ACP] + H2O. Involved in unsaturated fatty acids biosynthesis. Catalyzes the dehydration of short chain beta-hydroxyacyl-ACPs and long chain saturated and unsaturated beta-hydroxyacyl-ACPs. This Bartonella henselae (strain ATCC 49882 / DSM 28221 / CCUG 30454 / Houston 1) (Rochalimaea henselae) protein is 3-hydroxyacyl-[acyl-carrier-protein] dehydratase FabZ.